The chain runs to 130 residues: Small ribosomal subunit protein uS9 (130 aa).

Belongs to the universal ribosomal protein uS9 family.

This chain is Small ribosomal subunit protein uS9, found in Variovorax paradoxus (strain S110).